Reading from the N-terminus, the 66-residue chain is Large ribosomal subunit protein bL33c (66 aa).

The protein belongs to the bacterial ribosomal protein bL33 family.

The protein localises to the plastid. It is found in the chloroplast. In Eucalyptus globulus subsp. globulus (Tasmanian blue gum), this protein is Large ribosomal subunit protein bL33c.